The sequence spans 207 residues: Ribosomal RNA small subunit methyltransferase G (207 aa).

S-adenosyl-L-methionine contacts are provided by residues Gly73, Leu78, 124–125 (VE), and Arg139.

Belongs to the methyltransferase superfamily. RNA methyltransferase RsmG family.

The protein localises to the cytoplasm. It carries out the reaction guanosine(527) in 16S rRNA + S-adenosyl-L-methionine = N(7)-methylguanosine(527) in 16S rRNA + S-adenosyl-L-homocysteine. In terms of biological role, specifically methylates the N7 position of guanine in position 527 of 16S rRNA. In Escherichia coli (strain SMS-3-5 / SECEC), this protein is Ribosomal RNA small subunit methyltransferase G.